A 185-amino-acid chain; its full sequence is Hypoxanthine/guanine phosphoribosyltransferase (185 aa).

Belongs to the purine/pyrimidine phosphoribosyltransferase family. Archaeal HPRT subfamily. Homodimer.

Its subcellular location is the cytoplasm. The enzyme catalyses IMP + diphosphate = hypoxanthine + 5-phospho-alpha-D-ribose 1-diphosphate. It catalyses the reaction GMP + diphosphate = guanine + 5-phospho-alpha-D-ribose 1-diphosphate. It participates in purine metabolism; IMP biosynthesis via salvage pathway; IMP from hypoxanthine: step 1/1. Catalyzes a salvage reaction resulting in the formation of IMP that is energically less costly than de novo synthesis. This is Hypoxanthine/guanine phosphoribosyltransferase from Methanococcus maripaludis (strain C7 / ATCC BAA-1331).